Reading from the N-terminus, the 465-residue chain is D-arabinitol 4-dehydrogenase (465 aa).

Belongs to the mannitol dehydrogenase family.

The enzyme catalyses D-arabinitol + NAD(+) = D-xylulose + NADH + H(+). It functions in the pathway carbohydrate metabolism; D-arabinitol metabolism. This is D-arabinitol 4-dehydrogenase (dalD) from Ralstonia nicotianae (strain ATCC BAA-1114 / GMI1000) (Ralstonia solanacearum).